The chain runs to 132 residues: Large ribosomal subunit protein uL14 (132 aa).

The protein belongs to the universal ribosomal protein uL14 family. As to quaternary structure, part of the 50S ribosomal subunit. Forms a cluster with proteins L3 and L24e, part of which may contact the 16S rRNA in 2 intersubunit bridges.

Its function is as follows. Binds to 23S rRNA. Forms part of two intersubunit bridges in the 70S ribosome. This chain is Large ribosomal subunit protein uL14, found in Halorubrum lacusprofundi (strain ATCC 49239 / DSM 5036 / JCM 8891 / ACAM 34).